Reading from the N-terminus, the 445-residue chain is Protein cereblon (445 aa).

A disordered region spans residues 1–48 (MAGEGDQQDAAHNMGNHLPLLPADSEDEDDEIEMEVEDQDSKEARKPN). The segment covering 24-38 (DSEDEDDEIEMEVED) has biased composition (acidic residues). The residue at position 25 (S25) is a Phosphoserine. Residues 84–322 (IPVLPEVLMI…CELDIMNKCT (239 aa)) form the Lon N-terminal domain. Residues 321–429 (CTSLCCKQCQ…LTRSALLPTI (109 aa)) enclose the CULT domain. Residues C326 and C329 each contribute to the Zn(2+) site. 3 residues coordinate (S)-thalidomide: H381, W383, and W389. C394 and C397 together coordinate Zn(2+).

It belongs to the CRBN family. Component of a DCX (DDB1-CUL4-X-box) protein ligase complex, at least composed of CRBN, CUL4A, DDB1 and RBX1. Interacts directly with DDB1. Interacts with KCNT1. Interacts with ILF2. Interacts with TRAF6 and ECSIT. In terms of processing, ubiquitinated, ubiquitination is mediated by its own DCX protein ligase complex. As to expression, highly expressed in brain.

The protein resides in the cytoplasm. The protein localises to the nucleus. Its subcellular location is the membrane. It functions in the pathway protein modification; protein ubiquitination. Substrate recognition component of a DCX (DDB1-CUL4-X-box) E3 protein ligase complex that mediates the ubiquitination and subsequent proteasomal degradation of target proteins, such as MEIS2, ILF2 or GLUL. Normal degradation of key regulatory proteins is required for normal limb outgrowth and expression of the fibroblast growth factor FGF8. Maintains presynaptic glutamate release and consequently, cognitive functions such as memory and learning, by negatively regulating large-conductance calcium-activated potassium (BK) channels in excitatory neurons. Likely to function by regulating the assembly and neuronal surface expression of BK channels via its interaction with KCNT1. May also be involved in regulating anxiety-like behaviors via a BK channel-independent mechanism. Plays a negative role in TLR4 signaling by interacting with TRAF6 and ECSIT, leading to inhibition of ECSIT ubiquitination, an important step of the signaling. This chain is Protein cereblon (Crbn), found in Mus musculus (Mouse).